We begin with the raw amino-acid sequence, 279 residues long: UTP--glucose-1-phosphate uridylyltransferase (279 aa).

It belongs to the UDPGP type 2 family.

The catalysed reaction is alpha-D-glucose 1-phosphate + UTP + H(+) = UDP-alpha-D-glucose + diphosphate. In terms of biological role, may play a role in stationary phase survival. The protein is UTP--glucose-1-phosphate uridylyltransferase (galU) of Pseudomonas aeruginosa.